Reading from the N-terminus, the 807-residue chain is Protein WEAK CHLOROPLAST MOVEMENT UNDER BLUE LIGHT 1 (807 aa).

A disordered region spans residues 1-162 (MEDLKTVEAS…GTPKNVDSHR (162 aa)). The segment covering 31 to 40 (RESNIQSATK) has biased composition (polar residues). Residues 46–73 (QSQTDTEETQQSQTDTEETQQSQTDDTT) are compositionally biased toward low complexity. The span at 138–157 (RTVSSPRFSGSPVSTGTPKN) shows a compositional bias: polar residues. Phosphoserine is present on Ser148. Coiled-coil stretches lie at residues 191-429 (RMQA…ELVA), 457-489 (DLHA…LKLA), 516-621 (IAVA…ALEE), and 664-724 (AAVS…WRAE). Disordered stretches follow at residues 532–565 (IASV…EAKS) and 722–789 (RAEH…KKKK). Composition is skewed to basic and acidic residues over residues 537–548 (SKEKDAREKMVE), 722–732 (RAEHEQKRKAG), and 739–749 (KNLKESFEGGK). Over residues 761 to 781 (SSPSESYGTEENSETNLSPQT) the composition is skewed to polar residues.

Belongs to the WEB family. In terms of assembly, interacts with PMI2. As to expression, ubiquitous but preferentially in chloroplast-containing tissues.

It localises to the cytoplasm. Required for the chloroplast avoidance response under high intensity blue light. This avoidance response consists in the relocation of chloroplasts on the anticlinal side of exposed cells. Acts in association with PMI2 to maintain the velocity of chloroplast photorelocation movement via cp-actin filaments regulation. The protein is Protein WEAK CHLOROPLAST MOVEMENT UNDER BLUE LIGHT 1 (WEB1) of Arabidopsis thaliana (Mouse-ear cress).